We begin with the raw amino-acid sequence, 522 residues long: MASGGGGCSASERLPPPFPGMDPESEGAAGASEPEAGDSDTEGEDIFTGAAAATKPQSPKKTTSLFPIKNGSKENGIHEDQDQEPQDLFADATVELSLDSTQNNQKTMPGKTLTSHSPQEATNSPKPQPSYEELEEEEQEDQFDLTVGITDPEKIGDGMNAYVAYKVTTQTSLPMFRSRQFAVKRRFSDFLGLYEKLSEKHSQNGFIVPPPPEKSLIGMTKVKVGKEDSSSAEFLEKRRAALERYLQRIVNHPTMLQDPDVREFLEKEELPRAVGTQALSGAGLLKMFNKATDAVSKMTIKMNESDIWFEEKLQEVECEEQRLRKLHAVVETLVNHRKELALNTALFAKSLAMLGSSEDNTALSRALSQLAEVEEKIEQLHQEQANNDSFLLAELLSDYIRLLAIVRAAFDQRMKTWQRWQDAQATLQKKRESEARLLWANKPDKLQQAKDEITEWESRVTQYERDFERISTVVRKEVTRFEKEKSKDFKNHVMKYLETLLHSQQQLAKYWEAFLPEAKAIS.

Residues 1–144 (MASGGGGCSA…EEEEQEDQFD (144 aa)) form a disordered region. Ser-32 and Ser-39 each carry phosphoserine. Acidic residues predominate over residues 35 to 45 (EAGDSDTEGED). 2 positions are modified to phosphothreonine: Thr-41 and Thr-48. The span at 55–65 (KPQSPKKTTSL) shows a compositional bias: polar residues. Residues Ser-58 and Ser-72 each carry the phosphoserine modification. Basic and acidic residues predominate over residues 71–80 (GSKENGIHED). Polar residues predominate over residues 98–125 (LDSTQNNQKTMPGKTLTSHSPQEATNSP). The span at 132–143 (EELEEEEQEDQF) shows a compositional bias: acidic residues. Positions 143–272 (FDLTVGITDP…EFLEKEELPR (130 aa)) constitute a PX domain. A 1,2-diacyl-sn-glycero-3-phospho-(1D-myo-inositol-3-phosphate) contacts are provided by Arg-186, Ser-188, and Lys-214. The residue at position 188 (Ser-188) is a Phosphoserine. N6-acetyllysine is present on Lys-237. Residue Arg-238 coordinates a 1,2-diacyl-sn-glycero-3-phospho-(1D-myo-inositol-3-phosphate). Ser-280 is modified (phosphoserine). Residues 281–298 (GAGLLKMFNKATDAVSKM) are membrane-binding amphipathic helix. In terms of domain architecture, BAR spans 302-522 (MNESDIWFEE…AFLPEAKAIS (221 aa)).

The protein belongs to the sorting nexin family. Predominantly forms heterodimers with BAR domain-containing sorting nexins SNX5, SNX6 and SNX32. Can self-associate to form homodimers. The heterodimers are proposed to self-assemble into helical arrays on the membrane to stabilize and expand local membrane curvature underlying endosomal tubule formation. Thought to be a component of the originally described retromer complex (also called SNX-BAR retromer) which is a pentamer containing the heterotrimeric retromer cargo-selective complex (CSC), also described as vacuolar protein sorting subcomplex (VPS) and a heterodimeric membrane-deforming subcomplex formed between SNX1 or SNX2 and SNX5 or SNX6 (also called SNX-BAR subcomplex); the respective CSC and SNX-BAR subcomplexes associate with low affinity. Interacts with SNX5, SNX6, SNX32, VPS26A, VPS29, VPS35, DRD5, DENND5A, KALRN, RHOG (GDP-bound form). The interaction with SNX2 is reported controversially. Interacts with DNAJC13; prevented by presence of HGS. Interacts with HGS.

Its subcellular location is the endosome membrane. It is found in the golgi apparatus. It localises to the trans-Golgi network membrane. The protein resides in the early endosome membrane. The protein localises to the cell projection. Its subcellular location is the lamellipodium. In terms of biological role, involved in several stages of intracellular trafficking. Interacts with membranes containing phosphatidylinositol 3-phosphate (PtdIns(3P)) or phosphatidylinositol 3,5-bisphosphate (PtdIns(3,5)P2). Acts in part as component of the retromer membrane-deforming SNX-BAR subcomplex. The SNX-BAR retromer mediates retrograde transport of cargo proteins from endosomes to the trans-Golgi network (TGN) and is involved in endosome-to-plasma membrane transport for cargo protein recycling. The SNX-BAR subcomplex functions to deform the donor membrane into a tubular profile called endosome-to-TGN transport carrier (ETC). Can sense membrane curvature and has in vitro vesicle-to-membrane remodeling activity. Involved in retrograde endosome-to-TGN transport of lysosomal enzyme receptors (IGF2R, M6PR and SORT1). Plays a role in targeting ligand-activated EGFR to the lysosomes for degradation after endocytosis from the cell surface and release from the Golgi. Involvement in retromer-independent endocytic trafficking of P2RY1 and lysosomal degradation of protease-activated receptor-1/F2R. Promotes KALRN- and RHOG-dependent but retromer-independent membrane remodeling such as lamellipodium formation; the function is dependent on GEF activity of KALRN. Required for endocytosis of DRD5 upon agonist stimulation but not for basal receptor trafficking. In Mus musculus (Mouse), this protein is Sorting nexin-1 (Snx1).